Here is a 238-residue protein sequence, read N- to C-terminus: Uridylate kinase (238 aa).

13-16 (KLSG) lines the ATP pocket. Glycine 53 provides a ligand contact to UMP. The ATP site is built by glycine 54 and arginine 58. UMP contacts are provided by residues aspartate 73 and 134–141 (AGLPYFST). ATP is bound by residues asparagine 162, tyrosine 168, and aspartate 171.

The protein belongs to the UMP kinase family. Homohexamer.

The protein localises to the cytoplasm. The catalysed reaction is UMP + ATP = UDP + ADP. The protein operates within pyrimidine metabolism; CTP biosynthesis via de novo pathway; UDP from UMP (UMPK route): step 1/1. Its activity is regulated as follows. Inhibited by UTP. Its function is as follows. Catalyzes the reversible phosphorylation of UMP to UDP. The chain is Uridylate kinase from Clavibacter michiganensis subsp. michiganensis (strain NCPPB 382).